The sequence spans 576 residues: Arginine--tRNA ligase (576 aa).

A 'HIGH' region motif is present at residues 126–136 (ANPTGPMHIGH).

The protein belongs to the class-I aminoacyl-tRNA synthetase family. Monomer.

It is found in the cytoplasm. The catalysed reaction is tRNA(Arg) + L-arginine + ATP = L-arginyl-tRNA(Arg) + AMP + diphosphate. This chain is Arginine--tRNA ligase, found in Rickettsia bellii (strain OSU 85-389).